A 414-amino-acid chain; its full sequence is Tyrosine--tRNA ligase (414 aa).

Residue Tyr-38 participates in L-tyrosine binding. The 'HIGH' region signature appears at 43 to 52 (PTATSLHLGN). Residues Tyr-165 and Gln-169 each coordinate L-tyrosine. The 'KMSKS' region signature appears at 228-232 (KFGKS). Lys-231 is an ATP binding site. In terms of domain architecture, S4 RNA-binding spans 349–414 (FNANQIIDLG…KKYFFIIELI (66 aa)).

It belongs to the class-I aminoacyl-tRNA synthetase family. TyrS type 1 subfamily. As to quaternary structure, homodimer.

The protein localises to the cytoplasm. The catalysed reaction is tRNA(Tyr) + L-tyrosine + ATP = L-tyrosyl-tRNA(Tyr) + AMP + diphosphate + H(+). Catalyzes the attachment of tyrosine to tRNA(Tyr) in a two-step reaction: tyrosine is first activated by ATP to form Tyr-AMP and then transferred to the acceptor end of tRNA(Tyr). The sequence is that of Tyrosine--tRNA ligase from Mesomycoplasma hyopneumoniae (strain 232) (Mycoplasma hyopneumoniae).